A 30-amino-acid polypeptide reads, in one-letter code: Trypsin inhibitor 3 (30 aa).

Q1 is subject to Pyrrolidone carboxylic acid. Cystine bridges form between C4/C21, C11/C23, and C17/C29.

The protein localises to the secreted. Inhibits trypsin; probably participates in a plant defense mechanism. The chain is Trypsin inhibitor 3 from Momordica cochinchinensis (Spiny bitter cucumber).